Consider the following 87-residue polypeptide: Elastase inhibitor AFLEI (87 aa).

Positions 1 to 19 (MKFSLACLLALAGLQAALA) are cleaved as a signal peptide. A disulfide bond links Cys-24 and Cys-86.

Its subcellular location is the secreted. Elastase inhibitor. The polypeptide is Elastase inhibitor AFLEI (Aspergillus fumigatus (strain CBS 144.89 / FGSC A1163 / CEA10) (Neosartorya fumigata)).